We begin with the raw amino-acid sequence, 363 residues long: Dihydroorotate dehydrogenase (quinone) (363 aa).

FMN-binding positions include 67 to 71 (AGLDK) and threonine 91. Substrate is bound at residue lysine 71. Residue 116-120 (NRMGF) coordinates substrate. Residues asparagine 145 and asparagine 178 each contribute to the FMN site. Residue asparagine 178 coordinates substrate. Serine 181 serves as the catalytic Nucleophile. Asparagine 183 lines the substrate pocket. FMN is bound by residues lysine 219 and threonine 247. Position 248–249 (248–249 (NT)) interacts with substrate. Residues glycine 268, glycine 297, and 318 to 319 (YT) contribute to the FMN site.

Belongs to the dihydroorotate dehydrogenase family. Type 2 subfamily. Monomer. The cofactor is FMN.

The protein resides in the cell membrane. It carries out the reaction (S)-dihydroorotate + a quinone = orotate + a quinol. It functions in the pathway pyrimidine metabolism; UMP biosynthesis via de novo pathway; orotate from (S)-dihydroorotate (quinone route): step 1/1. In terms of biological role, catalyzes the conversion of dihydroorotate to orotate with quinone as electron acceptor. This is Dihydroorotate dehydrogenase (quinone) from Myxococcus xanthus (strain DK1622).